A 393-amino-acid polypeptide reads, in one-letter code: Pre-mRNA-splicing regulator WTAP (393 aa).

A disordered region spans residues 240–393 (QQQIQTSGNR…SSVNVQGSVL (154 aa)). The span at 254–267 (ESKDEGETSGKDCG) shows a compositional bias: basic and acidic residues. The segment covering 272 to 286 (GPSNGGSSHQRTHSS) has biased composition (polar residues). The span at 310–319 (LPNHSEERTS) shows a compositional bias: basic and acidic residues. Polar residues predominate over residues 320–353 (RGGSSYMNQLSTGYESVDSPTGSENSLTHQSNDT). Positions 354 to 365 (DSNHDSQEEKPV) are enriched in basic and acidic residues. A compositionally biased stretch (polar residues) spans 369–393 (GNRTVSSRHLQNGLDSSVNVQGSVL).

The protein belongs to the fl(2)d family. In terms of assembly, component of the WMM complex, a N6-methyltransferase complex composed of a catalytic subcomplex, named MAC, and of an associated subcomplex, named MACOM. Component of the MACOM subcomplex.

The protein resides in the nucleus speckle. Its subcellular location is the nucleus. It localises to the nucleoplasm. Associated component of the WMM complex, a complex that mediates N6-methyladenosine (m6A) methylation of RNAs, a modification that plays a role in the efficiency of mRNA splicing and RNA processing. The chain is Pre-mRNA-splicing regulator WTAP from Xenopus tropicalis (Western clawed frog).